Reading from the N-terminus, the 394-residue chain is MAATMTVEEVRKAQRAEGPATVLAIGTATPANCVYQADYPDYYFKITKSDHMADLKEKFKRMCDKSQIRKRYMHLTEEILQDNPNMCAYMAPSLDARQDIVVVEVPKLGKAAAQKAIKEWGQPRSKITHLVFCTTSGVDMPGADYQLTKMLGLRPSVKRLMMYQQGCFAGGTVLRLAKDLAENNRGARVLVVCSEITAVTFRGPHESHLDSLVGQALFGDGAAAVIIGADPDESIERPLFQLVSASQTILPDSEGAIDGHLREVGLTFHLLKDVPGLISKNIERALEDAFKPLGIDDWNSVFWIAHPGGPAILDMVEAKVNLNKERMRATRHVLSEYGNMSSACVLFIMDEMRKRSAEDGHTTTGEGMDWGVLFGFGPGLTVETVVLHSVPVTA.

The active site involves C167.

It belongs to the thiolase-like superfamily. Chalcone/stilbene synthases family.

The catalysed reaction is (E)-4-coumaroyl-CoA + 3 malonyl-CoA + 3 H(+) = 2',4,4',6'-tetrahydroxychalcone + 3 CO2 + 4 CoA. It functions in the pathway secondary metabolite biosynthesis; flavonoid biosynthesis. In terms of biological role, the primary product of this enzyme is 4,2',4',6'-tetrahydroxychalcone (also termed naringenin-chalcone or chalcone) which can under specific conditions spontaneously isomerize into naringenin. The polypeptide is Chalcone synthase 2 (CHS2) (Secale cereale (Rye)).